The following is a 360-amino-acid chain: Phenylalanine--tRNA ligase alpha subunit (360 aa).

Glu-260 is a Mg(2+) binding site.

The protein belongs to the class-II aminoacyl-tRNA synthetase family. Phe-tRNA synthetase alpha subunit type 1 subfamily. In terms of assembly, tetramer of two alpha and two beta subunits. The cofactor is Mg(2+).

The protein localises to the cytoplasm. It catalyses the reaction tRNA(Phe) + L-phenylalanine + ATP = L-phenylalanyl-tRNA(Phe) + AMP + diphosphate + H(+). In Beijerinckia indica subsp. indica (strain ATCC 9039 / DSM 1715 / NCIMB 8712), this protein is Phenylalanine--tRNA ligase alpha subunit.